Here is a 328-residue protein sequence, read N- to C-terminus: Tetraacyldisaccharide 4'-kinase (328 aa).

59–66 (TAGGNGKT) lines the ATP pocket.

The protein belongs to the LpxK family.

It catalyses the reaction a lipid A disaccharide + ATP = a lipid IVA + ADP + H(+). The protein operates within glycolipid biosynthesis; lipid IV(A) biosynthesis; lipid IV(A) from (3R)-3-hydroxytetradecanoyl-[acyl-carrier-protein] and UDP-N-acetyl-alpha-D-glucosamine: step 6/6. Its function is as follows. Transfers the gamma-phosphate of ATP to the 4'-position of a tetraacyldisaccharide 1-phosphate intermediate (termed DS-1-P) to form tetraacyldisaccharide 1,4'-bis-phosphate (lipid IVA). In Aliivibrio fischeri (strain ATCC 700601 / ES114) (Vibrio fischeri), this protein is Tetraacyldisaccharide 4'-kinase.